A 207-amino-acid chain; its full sequence is Vascular endothelial growth factor B (207 aa).

The signal sequence occupies residues 1 to 21 (MSPLLRRLLLAALLQLAPAQA). Intrachain disulfides connect cysteine 47–cysteine 89, cysteine 78–cysteine 122, and cysteine 82–cysteine 124. Basic and acidic residues predominate over residues 122-139 (CECRPKKKDSAVKPDRAA). Positions 122-207 (CECRPKKKDS…AASSVAKGGA (86 aa)) are disordered. Residues 174–207 (PSAHAAPSTTSALTPGPAAAAADAAASSVAKGGA) show a composition bias toward low complexity.

This sequence belongs to the PDGF/VEGF growth factor family. In terms of assembly, homodimer; disulfide-linked. Can also form heterodimer with VEGF. In terms of processing, VEGF-B186 is O-glycosylated. Expressed in all tissues except liver. Highest levels found in heart, skeletal muscle and pancreas.

The protein localises to the secreted. Its function is as follows. Growth factor for endothelial cells. VEGF-B167 binds heparin and neuropilin-1 whereas the binding to neuropilin-1 of VEGF-B186 is regulated by proteolysis. This Homo sapiens (Human) protein is Vascular endothelial growth factor B (VEGFB).